The chain runs to 291 residues: Nucleotide-binding protein EUBREC_0697 (291 aa).

8–15 (GMSGAGKS) lines the ATP pocket. 59-62 (DVRN) contacts GTP.

It belongs to the RapZ-like family.

Displays ATPase and GTPase activities. The chain is Nucleotide-binding protein EUBREC_0697 from Agathobacter rectalis (strain ATCC 33656 / DSM 3377 / JCM 17463 / KCTC 5835 / VPI 0990) (Eubacterium rectale).